The sequence spans 115 residues: U3-lycotoxin-Ls1a (115 aa).

The first 20 residues, 1-20 (MKFVLLFGVFLVTLFSYSSA), serve as a signal peptide directing secretion. Residues 21–44 (EMLDDFDQADEDELLSLIEKEEAR) constitute a propeptide that is removed on maturation. Intrachain disulfides connect Cys-48/Cys-63, Cys-55/Cys-72, Cys-62/Cys-87, and Cys-74/Cys-85.

The protein belongs to the neurotoxin 19 (CSTX) family. 01 subfamily. As to expression, expressed by the venom gland.

Its subcellular location is the secreted. This chain is U3-lycotoxin-Ls1a, found in Lycosa singoriensis (Wolf spider).